The chain runs to 240 residues: MGRAFEYRRAAKEKRWDKMSKVFPKLAKAITLAAKEGGSEPDTNAKLRTAILNAKAQNMPKDNIDAAIKRASSKEGNLSEITYEGKANFGVLIIMECMTDNPTRTIANLKSYFNKTQGASIVPNGSLEFMFNRKSVFECLKSEVENLKLSLEDLEFALIDYGLEELEEVGDKIIIRGDYNSFKLLNEGFESLRLPIIKAGLQRIATTPIELNDEQMELTEKLLDRIEDDDDVVALYTNIE.

It belongs to the TACO1 family.

Its subcellular location is the cytoplasm. The sequence is that of Probable transcriptional regulatory protein jhp_0149 from Helicobacter pylori (strain J99 / ATCC 700824) (Campylobacter pylori J99).